The primary structure comprises 139 residues: uncharacterized protein (139 aa).

A helical transmembrane segment spans residues 43–59 (FGVISTLIAIFIGAFWL).

The protein localises to the membrane. This is an uncharacterized protein from Haemophilus influenzae (strain ATCC 51907 / DSM 11121 / KW20 / Rd).